A 382-amino-acid chain; its full sequence is MTISYTYDVATESYFGFFKVLFRWKGSVWKLIHRELFMWLVLYYTVLAIYRTLDEERKKIFRSNIEHFINFEPSILTFMLSFFVTTIVQRWNNVFTNMGFIENAAYAVSSFMKNGEDVRRAQRTVIRYLVASQILVMRSISIKALRRFPNYESIVTAGFLTKEESTIIQNTDLSYDSSCVPIRWAIQVLRHQYRSGNFFSHSVYRATWKEVSDFETHLSRVRKVDWVPIPLAYPQVIFFAVRLYFVICAFAKQYFDLDDDDARYVIHYYFPIVTVFQFICLMGWLKVAEALLNPLGEDDDDFEVNFLIDSNIYTGMLIIETSKPPPLKPDLFEDRNFGPIYPNNITDQSVGQALCGSVENIKLAGKDASIEVKKNGENNPPA.

4 helical membrane passes run 29–49 (WKLI…VLAI), 68–88 (FINF…TTIV), 231–251 (LAYP…CAFA), and 265–285 (VIHY…MGWL).

This sequence belongs to the anion channel-forming bestrophin (TC 1.A.46) family. Calcium-sensitive chloride channel subfamily.

Its subcellular location is the membrane. This chain is Bestrophin-6 (best-6), found in Caenorhabditis elegans.